A 250-amino-acid chain; its full sequence is 3-deoxy-manno-octulosonate cytidylyltransferase (250 aa).

It belongs to the KdsB family.

The protein resides in the cytoplasm. It catalyses the reaction 3-deoxy-alpha-D-manno-oct-2-ulosonate + CTP = CMP-3-deoxy-beta-D-manno-octulosonate + diphosphate. The protein operates within nucleotide-sugar biosynthesis; CMP-3-deoxy-D-manno-octulosonate biosynthesis; CMP-3-deoxy-D-manno-octulosonate from 3-deoxy-D-manno-octulosonate and CTP: step 1/1. It functions in the pathway bacterial outer membrane biogenesis; lipopolysaccharide biosynthesis. Its function is as follows. Activates KDO (a required 8-carbon sugar) for incorporation into bacterial lipopolysaccharide in Gram-negative bacteria. The polypeptide is 3-deoxy-manno-octulosonate cytidylyltransferase (Francisella tularensis subsp. holarctica (strain LVS)).